The primary structure comprises 457 residues: Transcription factor PCF7 (457 aa).

A coiled-coil region spans residues 58 to 84 (STLHYLLQEKERAQQAHEQLQIYQQQQ). Residues 95 to 121 (RQPASRGPGGGGGGGDGGGSSGESTPV) form a disordered region. Residues 101-115 (GPGGGGGGGDGGGSS) show a composition bias toward gly residues. Residues 140-198 (RKDRHSKVCTARGLRDRRVRLAAHTAIRFYDVQDRLGYDRPSKAVDWLMRNAKAAIDEL) form the TCP domain. 2 disordered regions span residues 199–231 (PDRA…GFGN) and 263–299 (KSLF…SNQQ). The segment covering 212-230 (STEQPEGTEQANSTSYGFG) has biased composition (polar residues). The span at 268 to 278 (SSSTASGAASA) shows a compositional bias: low complexity.

As to quaternary structure, forms homodimers and heterodimers.

The protein resides in the nucleus. Its function is as follows. Transcription activator. Binds the promoter core sequence 5'-GGNCC-3'. The protein is Transcription factor PCF7 (PCF7) of Oryza sativa subsp. indica (Rice).